A 176-amino-acid polypeptide reads, in one-letter code: Parathyroid hormone-related protein (176 aa).

The signal sequence occupies residues 1 to 25 (MMFTKLFQQWSFAVFLLSYSVPSYG). Residues 26–37 (RSVEGISRRLKR) constitute a propeptide that is removed on maturation. The important for receptor binding stretch occupies residues 58-69 (RIFLQNLIEGVN). A disordered region spans residues 76–157 (TSEVSPNPKP…WLNSGMYGSN (82 aa)). Composition is skewed to polar residues over residues 77 to 91 (SEVSPNPKPATNTKN) and 106 to 116 (TQETNKSQTYK). Residues 109–130 (TNKSQTYKEQPLKVSGKKKKAK) carry the Nuclear localization signal motif. Residues 123 to 133 (SGKKKKAKPGK) show a composition bias toward basic residues.

Belongs to the parathyroid hormone family.

It localises to the secreted. The protein localises to the cytoplasm. The protein resides in the nucleus. Functionally, neuroendocrine peptide which is a critical regulator of cellular and organ growth, development, migration, differentiation and survival and of epithelial calcium ion transport. Acts by binding to its receptor, PTH1R, activating G protein-coupled receptor signaling. Regulates endochondral bone development and epithelial-mesenchymal interactions during the formation of the mammary glands and teeth. Required for skeletal homeostasis. In terms of biological role, potent inhibitor of osteoclastic bone resorption. In Gallus gallus (Chicken), this protein is Parathyroid hormone-related protein (PTHLH).